Here is a 237-residue protein sequence, read N- to C-terminus: 4-hydroxy-tetrahydrodipicolinate reductase (237 aa).

Residues 11 to 16 (GASGRM), 92 to 94 (GTT), and 116 to 119 (GSNF) each bind NAD(+). The active-site Proton donor/acceptor is His148. His149 is a (S)-2,3,4,5-tetrahydrodipicolinate binding site. Lys152 acts as the Proton donor in catalysis. 158-159 (GS) contributes to the (S)-2,3,4,5-tetrahydrodipicolinate binding site.

Belongs to the DapB family.

It is found in the cytoplasm. The catalysed reaction is (S)-2,3,4,5-tetrahydrodipicolinate + NAD(+) + H2O = (2S,4S)-4-hydroxy-2,3,4,5-tetrahydrodipicolinate + NADH + H(+). It carries out the reaction (S)-2,3,4,5-tetrahydrodipicolinate + NADP(+) + H2O = (2S,4S)-4-hydroxy-2,3,4,5-tetrahydrodipicolinate + NADPH + H(+). It participates in amino-acid biosynthesis; L-lysine biosynthesis via DAP pathway; (S)-tetrahydrodipicolinate from L-aspartate: step 4/4. Functionally, catalyzes the conversion of 4-hydroxy-tetrahydrodipicolinate (HTPA) to tetrahydrodipicolinate. The protein is 4-hydroxy-tetrahydrodipicolinate reductase of Xylella fastidiosa (strain 9a5c).